Reading from the N-terminus, the 326-residue chain is Tetraacyldisaccharide 4'-kinase (326 aa).

55–62 serves as a coordination point for ATP; the sequence is TAGGNGKT.

This sequence belongs to the LpxK family.

The enzyme catalyses a lipid A disaccharide + ATP = a lipid IVA + ADP + H(+). It participates in glycolipid biosynthesis; lipid IV(A) biosynthesis; lipid IV(A) from (3R)-3-hydroxytetradecanoyl-[acyl-carrier-protein] and UDP-N-acetyl-alpha-D-glucosamine: step 6/6. In terms of biological role, transfers the gamma-phosphate of ATP to the 4'-position of a tetraacyldisaccharide 1-phosphate intermediate (termed DS-1-P) to form tetraacyldisaccharide 1,4'-bis-phosphate (lipid IVA). This is Tetraacyldisaccharide 4'-kinase from Serratia proteamaculans (strain 568).